Consider the following 148-residue polypeptide: MGRFISVSFGLLVVFLSLSGAGAGLCCPLDWSSYDLYCYKVFKQQMNWTDAEQFCTQQHTGSHLVSFHSTEEVDFVVQMSYKSLDTTFFWIGVNNIWNGCNWQWSDGTGLDYKEWREQFECLVAKTFDNQWWSMDCNSTYSFVCKFQA.

The N-terminal stretch at 1 to 23 (MGRFISVSFGLLVVFLSLSGAGA) is a signal peptide. Cysteine 27 and cysteine 38 are oxidised to a cystine. Residues 34–145 (YDLYCYKVFK…CNSTYSFVCK (112 aa)) form the C-type lectin domain. Asparagine 47 carries an N-linked (GlcNAc...) asparagine glycan. 2 disulfide bridges follow: cysteine 55–cysteine 144 and cysteine 121–cysteine 136. Asparagine 137 is a glycosylation site (N-linked (GlcNAc...) asparagine).

Tetramer of heterodimers of alpha and beta subunits (alphabeta)(4); disulfide-linked. In terms of tissue distribution, expressed by the venom gland.

It localises to the secreted. Its function is as follows. Snaclec that induces human platelet aggregation in the absence of any cofactor with the EC(50) of 0.25 nM and causes tyrosine phosphorylation in human platelets. Antibodies against either platelet GPIbalpha (GP1BA) or GPVI (GP6) inhibit alboaggregin D-induced platelet aggregation. Only the combination of these two antibodies completely inhibit aggregation, suggesting that it acts through both GPIbalpha (GP1BA) and GPVI (GP6). This is Snaclec alboaggregin-D subunit beta from Trimeresurus albolabris (White-lipped pit viper).